Consider the following 128-residue polypeptide: Transcription antitermination protein NusB (128 aa).

It belongs to the NusB family.

Functionally, involved in transcription antitermination. Required for transcription of ribosomal RNA (rRNA) genes. Binds specifically to the boxA antiterminator sequence of the ribosomal RNA (rrn) operons. This chain is Transcription antitermination protein NusB, found in Listeria monocytogenes serotype 4b (strain CLIP80459).